The following is a 512-amino-acid chain: Glycerol-3-phosphate dehydrogenase (512 aa).

D16–E44 provides a ligand contact to FAD.

Belongs to the FAD-dependent glycerol-3-phosphate dehydrogenase family. FAD serves as cofactor.

Its subcellular location is the cytoplasm. The catalysed reaction is a quinone + sn-glycerol 3-phosphate = dihydroxyacetone phosphate + a quinol. The protein is Glycerol-3-phosphate dehydrogenase (glpD) of Pseudomonas aeruginosa (strain ATCC 15692 / DSM 22644 / CIP 104116 / JCM 14847 / LMG 12228 / 1C / PRS 101 / PAO1).